The primary structure comprises 188 residues: MGKTADNHGPVRSETAREGRENQVYSPVTGARLVAGCICLTPDKKQVLMITSSAHKKRWIVPKGGVEKDEPNYETTAQRETWEEAGCIGKIVANLGTVEDMRPPKDWNKDIKQFENSRKDSEVAKHPPRTEFHFYELEIENLLDKFPECHKRHRKLYSYTEAKQNLIDAKRPELLEALNRSAIIKDDK.

Basic and acidic residues predominate over residues 1-21 (MGKTADNHGPVRSETAREGRE). Residues 1 to 23 (MGKTADNHGPVRSETAREGRENQ) form a disordered region. A Nudix hydrolase domain is found at 30–179 (GARLVAGCIC…KRPELLEALN (150 aa)). 1D-myo-inositol hexakisphosphate is bound by residues R32, S52, S53, and K63. Residues R32, S52, S53, and K63 each contribute to the 5-diphospho-1D-myo-inositol 1,2,3,4,6-pentakisphosphate site. Residues R32, S52, S53, and K63 each coordinate P(1),P(5)-bis(5'-adenosyl) pentaphosphate. 3 residues coordinate Mg(2+): K63, E80, and E84. Positions 65-86 (GVEKDEPNYETTAQRETWEEAG) match the Nudix box motif. Residue D100 coordinates P(1),P(5)-bis(5'-adenosyl) pentaphosphate. 1D-myo-inositol hexakisphosphate-binding residues include R102, R129, R152, and R171. 5-diphospho-1D-myo-inositol 1,2,3,4,6-pentakisphosphate is bound at residue R102. R152 and R171 together coordinate 5-diphospho-1D-myo-inositol 1,2,3,4,6-pentakisphosphate. Residues R152, R171, and E173 each coordinate P(1),P(5)-bis(5'-adenosyl) pentaphosphate.

It belongs to the Nudix hydrolase family. DIPP subfamily. It depends on Mg(2+) as a cofactor. Mn(2+) is required as a cofactor. Requires Zn(2+) as cofactor.

Its subcellular location is the cytoplasm. It is found in the nucleus. It carries out the reaction diphospho-myo-inositol polyphosphate + H2O = myo-inositol polyphosphate + phosphate.. The catalysed reaction is P(1),P(6)-bis(5'-adenosyl) hexaphosphate + H2O = adenosine 5'-pentaphosphate + AMP + 2 H(+). The enzyme catalyses P(1),P(5)-bis(5'-adenosyl) pentaphosphate + H2O = adenosine 5'-tetraphosphate + AMP + 2 H(+). It catalyses the reaction [phosphate](n+1) + n H2O = (n+1) phosphate + n H(+). Its function is as follows. May eliminate potentially toxic dinucleoside polyphosphates during sporulation. Most active against diadenosine 5',5'''-P1,P6-hexaphosphate (Ap6A). Can also hydrolyze diadenosine 5',5'''-P1,P5-pentaphosphate (Ap5A), adenosine 5'-pentaphosphate (p5A), and adenosine 5'-tetraphosphate (p4A) are also substrates, but not diadenosine 5',5'''-P1,P4-tetraphosphate (Ap4A) or other dinucleotides, mononucleotides, nucleotide sugars, or nucleotide alcohols. Also cleaves a beta-phosphate from the diphosphate groups in PP-InsP5 (diphosphoinositol pentakisphosphate) and [PP]2-InsP4 (bisdiphosphoinositol tetrakisphosphate). Also has endopolyphosphatase activity. The polypeptide is Diphosphoinositol polyphosphate phosphohydrolase DDP1 (DDP1) (Saccharomyces cerevisiae (strain ATCC 204508 / S288c) (Baker's yeast)).